The chain runs to 4485 residues: Dynein gamma chain, flagellar outer arm (4485 aa).

The tract at residues Met1–Glu1780 is stem. 5 coiled-coil regions span residues Ile449–Lys469, Val804–Tyr838, Val1093–Ile1114, Asp1275–Leu1297, and Lys1699–Thr1727. 4 AAA regions span residues Tyr1781–Thr2002, Lys2061–Lys2279, Thr2384–Gly2638, and Lys2763–Tyr3013. ATP-binding positions include Gly1819–Thr1826, Gly2099–Ser2106, Gly2425–Thr2432, and Gly2802–Gln2809. Coiled-coil stretches lie at residues Ala3077 to Gln3099, Glu3196 to Glu3227, Lys3265 to Glu3343, and Glu3569 to Arg3663. Residues Ala3077 to Glu3343 are stalk. AAA stretches follow at residues Leu3412 to Glu3643 and Ala3857 to Asn4071.

The protein belongs to the dynein heavy chain family. Consists of at least 3 heavy chains (alpha, beta and gamma), 2 intermediate chains and 8 light chains.

Its subcellular location is the cell projection. The protein resides in the cilium. The protein localises to the flagellum. It localises to the cytoplasm. It is found in the cytoskeleton. Its subcellular location is the flagellum axoneme. In terms of biological role, force generating protein of eukaryotic cilia and flagella. Produces force towards the minus ends of microtubules. Dynein has ATPase activity; the force-producing power stroke is thought to occur on release of ADP. This is Dynein gamma chain, flagellar outer arm (ODA2) from Chlamydomonas reinhardtii (Chlamydomonas smithii).